We begin with the raw amino-acid sequence, 526 residues long: Bifunctional purine biosynthesis protein PurH (526 aa).

Residues 1 to 149 form the MGS-like domain; that stretch reads MLHSLPIRRA…KNHEAVTVVV (149 aa).

The protein belongs to the PurH family.

The enzyme catalyses (6R)-10-formyltetrahydrofolate + 5-amino-1-(5-phospho-beta-D-ribosyl)imidazole-4-carboxamide = 5-formamido-1-(5-phospho-D-ribosyl)imidazole-4-carboxamide + (6S)-5,6,7,8-tetrahydrofolate. It carries out the reaction IMP + H2O = 5-formamido-1-(5-phospho-D-ribosyl)imidazole-4-carboxamide. It functions in the pathway purine metabolism; IMP biosynthesis via de novo pathway; 5-formamido-1-(5-phospho-D-ribosyl)imidazole-4-carboxamide from 5-amino-1-(5-phospho-D-ribosyl)imidazole-4-carboxamide (10-formyl THF route): step 1/1. Its pathway is purine metabolism; IMP biosynthesis via de novo pathway; IMP from 5-formamido-1-(5-phospho-D-ribosyl)imidazole-4-carboxamide: step 1/1. In Rhodospirillum rubrum (strain ATCC 11170 / ATH 1.1.1 / DSM 467 / LMG 4362 / NCIMB 8255 / S1), this protein is Bifunctional purine biosynthesis protein PurH.